The following is a 119-amino-acid chain: DNA-binding protein inhibitor ID-3 (119 aa).

A bHLH domain is found at 28-80 (RGKGPAAEEPLSLLDDMNHCYSRLRELVPGVPRGTQLSQVEILQRVIDYILDL).

As to quaternary structure, homodimer, and heterodimer with other HLH proteins. Interacts with COPS5 and COPS7A. Interacts with IFI204. Interacts with GATA4 and NKX2-5. Interacts with ANKRD2; both proteins cooperate in myoblast differentiation. Interacts with CLOCK and BMAL1. Expressed abundantly in lung, kidney and adrenal gland, but not in adult brain.

It is found in the nucleus. In terms of biological role, transcriptional regulator (lacking a basic DNA binding domain) which negatively regulates the basic helix-loop-helix (bHLH) transcription factors by forming heterodimers and inhibiting their DNA binding and transcriptional activity. Implicated in regulating a variety of cellular processes, including cellular growth, senescence, differentiation, apoptosis, angiogenesis, and neoplastic transformation. Involved in myogenesis by inhibiting skeletal muscle and cardiac myocyte differentiation and promoting muscle precursor cells proliferation. Inhibits the binding of E2A-containing protein complexes to muscle creatine kinase E-box enhancer. Regulates the circadian clock by repressing the transcriptional activator activity of the CLOCK-BMAL1 heterodimer. This is DNA-binding protein inhibitor ID-3 (ID3) from Homo sapiens (Human).